The following is a 426-amino-acid chain: Dihydroorotase (426 aa).

Zn(2+) is bound by residues H58 and H60. Substrate contacts are provided by residues 60–62 and N92; that span reads HLR. Zn(2+) is bound by residues D150, H177, and H230. Substrate is bound at residue N276. D303 is a Zn(2+) binding site. D303 is an active-site residue. Residues H307 and 321–322 each bind substrate; that span reads FG.

The protein belongs to the metallo-dependent hydrolases superfamily. DHOase family. Class I DHOase subfamily. Zn(2+) is required as a cofactor.

The catalysed reaction is (S)-dihydroorotate + H2O = N-carbamoyl-L-aspartate + H(+). It functions in the pathway pyrimidine metabolism; UMP biosynthesis via de novo pathway; (S)-dihydroorotate from bicarbonate: step 3/3. In terms of biological role, catalyzes the reversible cyclization of carbamoyl aspartate to dihydroorotate. The sequence is that of Dihydroorotase from Listeria innocua serovar 6a (strain ATCC BAA-680 / CLIP 11262).